We begin with the raw amino-acid sequence, 90 residues long: Probable Fe(2+)-trafficking protein (90 aa).

It belongs to the Fe(2+)-trafficking protein family.

Its function is as follows. Could be a mediator in iron transactions between iron acquisition and iron-requiring processes, such as synthesis and/or repair of Fe-S clusters in biosynthetic enzymes. This Koribacter versatilis (strain Ellin345) protein is Probable Fe(2+)-trafficking protein.